Consider the following 748-residue polypeptide: CCR4-NOT transcription complex subunit 10-A (748 aa).

The segment covering 1 to 17 (MAADKAGEQGAEKHEDS) has biased composition (basic and acidic residues). 4 disordered regions span residues 1–25 (MAAD…GISD), 184–205 (SNNK…EPFA), 483–524 (KQEN…PPSS), and 605–635 (VSLG…QMPQ). Positions 185–200 (NNKNGKNNETNSNANN) are enriched in low complexity. Polar residues-rich tracts occupy residues 487–509 (GSKT…VCSN) and 605–615 (VSLGVSSNEQE).

The protein belongs to the CNOT10 family. Component of the CCR4-NOT complex. cnot10 and cnot11 form a subcomplex docked to the cnot1 scaffold.

The protein resides in the cytoplasm. Its subcellular location is the nucleus. Component of the CCR4-NOT complex which is one of the major cellular mRNA deadenylases and is linked to various cellular processes including bulk mRNA degradation, miRNA-mediated repression, translational repression during translational initiation and general transcription regulation. Additional complex functions may be a consequence of its influence on mRNA expression. Is not required for association of CNOT7 to the CCR4-NOT complex. This chain is CCR4-NOT transcription complex subunit 10-A (cnot10-a), found in Xenopus laevis (African clawed frog).